The chain runs to 282 residues: Casein kinase II subunit beta-2 (282 aa).

Residues 1 to 92 (MYRERGMVGS…ESEVSGSDGE (92 aa)) are disordered. A compositionally biased stretch (basic and acidic residues) spans 13–28 (EVVDRKRINEIHDNRP). Composition is skewed to polar residues over residues 29 to 47 (SHSM…STSV) and 61 to 71 (RSGSISKTNIS). The span at 75 to 92 (DISDTDSEESEVSGSDGE) shows a compositional bias: acidic residues.

The protein belongs to the casein kinase 2 subunit beta family. In terms of assembly, heterotetramer of two catalytic alpha subunits and two regulatory beta subunits. Interacts with CCA1. In terms of processing, phosphorylated by alpha subunit.

The protein resides in the cytoplasm. It localises to the cytosol. Its subcellular location is the nucleus. Functionally, plays a complex role in regulating the basal catalytic activity of the alpha subunit. The tetrameric holoenzyme CK2, composed of two alpha and two beta subunits, phosphorylates the transcription factor PIF1 after an exposure to light, resulting in a proteasome-dependent degradation of PIF1 and promotion of photomorphogenesis. CK2 phosphorylates translation initiation factors. May participate in the regulation of the initiation of translation. The polypeptide is Casein kinase II subunit beta-2 (CKB2) (Arabidopsis thaliana (Mouse-ear cress)).